We begin with the raw amino-acid sequence, 552 residues long: Olefin beta-lactone synthetase (552 aa).

Residues 182-190 (TSGSTGVPK), 316-321 (TPYGAT), aspartate 425, and arginine 440 contribute to the ATP site.

The protein belongs to the ATP-dependent AMP-binding enzyme family. As to quaternary structure, monomer.

It catalyses the reaction a (2R,3S)-2-alkyl-3-hydroxyalkanoate + ATP = a cis-3-alkyl-4-alkyloxetan-2-one + AMP + diphosphate. In terms of biological role, involved in olefin biosynthesis. Catalyzes the conversion of beta-hydroxy acid substrates to beta-lactones in the presence of ATP. Can use all four stereoisomers of 2-hexyl-3-hydroxydecanoic acid. In Stenotrophomonas maltophilia (strain K279a), this protein is Olefin beta-lactone synthetase.